A 195-amino-acid chain; its full sequence is MSALNKIVKRSSSQPTETDLLVAQCLYDLESSSKDMAKELRPLQITSAREVEVGGGKKAIVVFVPQPLLKAFHKCQARLTRELEKKFADRHVIFIAQRRILPKPGRKSRVTQKRPRSRTLTAVHNAILEDIVFPTEIIGKRTRQATDGRKTIKVFLDNRDANTVDYKLGSFSSVYHKLTGKNVTFEFPVATGEGL.

Phosphothreonine is present on residues Thr146 and Thr151. 2 positions are modified to phosphoserine: Ser172 and Ser173.

Belongs to the eukaryotic ribosomal protein eS7 family. In terms of assembly, component of the small ribosomal subunit (SSU). Mature yeast ribosomes consist of a small (40S) and a large (60S) subunit. The 40S small subunit contains 1 molecule of ribosomal RNA (18S rRNA) and at least 33 different proteins. The large 60S subunit contains 3 rRNA molecules (25S, 5.8S and 5S rRNA) and at least 46 different proteins. Interacts with snoRNA U3. uS11 interacts with MPP10. Component of the ribosomal small subunit (SSU) processome composed of at least 40 protein subunits and snoRNA U3.

Its subcellular location is the cytoplasm. It localises to the nucleus. The protein resides in the nucleolus. In terms of biological role, component of the ribosome, a large ribonucleoprotein complex responsible for the synthesis of proteins in the cell. The small ribosomal subunit (SSU) binds messenger RNAs (mRNAs) and translates the encoded message by selecting cognate aminoacyl-transfer RNA (tRNA) molecules. The large subunit (LSU) contains the ribosomal catalytic site termed the peptidyl transferase center (PTC), which catalyzes the formation of peptide bonds, thereby polymerizing the amino acids delivered by tRNAs into a polypeptide chain. The nascent polypeptides leave the ribosome through a tunnel in the LSU and interact with protein factors that function in enzymatic processing, targeting, and the membrane insertion of nascent chains at the exit of the ribosomal tunnel. eS7 is involved in nucleolar processing of pre-18S ribosomal RNA and ribosome assembly. The polypeptide is Small ribosomal subunit protein eS7 (rps7) (Schizosaccharomyces pombe (strain 972 / ATCC 24843) (Fission yeast)).